The following is a 358-amino-acid chain: Aromatic amino acid aminotransferase (358 aa).

An N6-(pyridoxal phosphate)lysine modification is found at Lys-222.

Belongs to the class-II pyridoxal-phosphate-dependent aminotransferase family. In terms of assembly, homodimer. Pyridoxal 5'-phosphate is required as a cofactor.

The catalysed reaction is an aromatic L-alpha-amino acid + 2-oxoglutarate = an aromatic oxo-acid + L-glutamate. In terms of biological role, aminotransferase that catalyzes the conversion of aromatic amino acids and 2-oxoglutarate into corresponding aromatic oxo acids and L-glutamate. This chain is Aromatic amino acid aminotransferase, found in Mycobacterium sp. (strain JLS).